Reading from the N-terminus, the 111-residue chain is Photosystem II reaction center Psb28 protein (111 aa).

The protein belongs to the Psb28 family. As to quaternary structure, part of the photosystem II complex.

It is found in the cellular thylakoid membrane. The sequence is that of Photosystem II reaction center Psb28 protein from Crocosphaera subtropica (strain ATCC 51142 / BH68) (Cyanothece sp. (strain ATCC 51142)).